Here is a 102-residue protein sequence, read N- to C-terminus: ATP-dependent Clp protease adapter protein ClpS (102 aa).

The protein belongs to the ClpS family. In terms of assembly, binds to the N-terminal domain of the chaperone ClpA.

Involved in the modulation of the specificity of the ClpAP-mediated ATP-dependent protein degradation. In Shewanella amazonensis (strain ATCC BAA-1098 / SB2B), this protein is ATP-dependent Clp protease adapter protein ClpS.